Here is a 757-residue protein sequence, read N- to C-terminus: MKKSIIAFPRIGSNRELKFALEKYFRKEISEAELQIVAKELRLESWKSQKEAGIDYPISNDFSFYDQTLDLSIALGVIPERYKKLKLNELDTLFALARGFQDEENDVKARPMKKWFNTNYHYIVPEISKETVIKANFSKLLNEYQEAKTAGFETRPTIIGPYTFLILADYLSGVTEDAILSDLIGAYTVLFDQLNNLGGEWLQIEEPALVLDQTEEEQQLFIKIYQELLKNKNKLKVLLQTYFGDLRDSYQEIIKLDFDGIGLDFVEGRESVKLVQKYGFPQDKLLFAGVVNGKNIWRNHYQKTLSLLKDLGNIDNIVINTSCSLQHVPVTTENEIKLSKEILNHFAFAKEKLVEVSEISEIYVKKNTSLLDKNIALFDKNRVQENIQLKQKITHLTDKDFIRTPSLVERRADQIKALRLPLLPTTTIGSFPQTPEVRKARLQYKRGELSKSDYEAFLEEKIKECLELQENIGLDVLVHGEFERNDMVEYFGEQLDGYIFTQKAWVQSYGTRCVKPPIVWGDITRPQAMTVRWSAYAQSQTSKPVKGMLTGPVTILNWSFPREDISLKESTLQLALAVQEEVLDLEKAGIKIIQIDEAALREKLPLRRSDWYSEYLDWSIPAFRLVHSKVKAETQIHTHMCYSEFEDIIPSIDAMDADVISFEASRSQLSIIDALKAHHFQTLVGPGVYDIHSPRIPSSQEIKIQLEKILNKLPIEQVWVNPDCGLKTRGNKETIPSLTHLVEATKEVRKEKITYDK.

5-methyltetrahydropteroyltri-L-glutamate-binding positions include 15–18 (RELK) and Lys-114. L-homocysteine contacts are provided by residues 428 to 430 (IGS) and Glu-481. L-methionine contacts are provided by residues 428–430 (IGS) and Glu-481. 5-methyltetrahydropteroyltri-L-glutamate contacts are provided by residues 512-513 (RC) and Trp-558. Asp-596 is a binding site for L-homocysteine. Asp-596 contributes to the L-methionine binding site. Glu-602 contributes to the 5-methyltetrahydropteroyltri-L-glutamate binding site. The Zn(2+) site is built by His-639, Cys-641, and Glu-663. The active-site Proton donor is the His-692. Cys-724 is a binding site for Zn(2+).

The protein belongs to the vitamin-B12 independent methionine synthase family. It depends on Zn(2+) as a cofactor.

It catalyses the reaction 5-methyltetrahydropteroyltri-L-glutamate + L-homocysteine = tetrahydropteroyltri-L-glutamate + L-methionine. The protein operates within amino-acid biosynthesis; L-methionine biosynthesis via de novo pathway; L-methionine from L-homocysteine (MetE route): step 1/1. Functionally, catalyzes the transfer of a methyl group from 5-methyltetrahydrofolate to homocysteine resulting in methionine formation. This chain is 5-methyltetrahydropteroyltriglutamate--homocysteine methyltransferase, found in Lactococcus lactis subsp. cremoris (strain SK11).